The sequence spans 98 residues: NADH-ubiquinone oxidoreductase chain 4L (98 aa).

A run of 3 helical transmembrane segments spans residues 1 to 21 (MTLV…GLLM), 29 to 49 (SLLC…VTIL), and 61 to 81 (IILL…LVMV).

The protein belongs to the complex I subunit 4L family. Core subunit of respiratory chain NADH dehydrogenase (Complex I) which is composed of 45 different subunits.

It localises to the mitochondrion inner membrane. It carries out the reaction a ubiquinone + NADH + 5 H(+)(in) = a ubiquinol + NAD(+) + 4 H(+)(out). Core subunit of the mitochondrial membrane respiratory chain NADH dehydrogenase (Complex I) which catalyzes electron transfer from NADH through the respiratory chain, using ubiquinone as an electron acceptor. Part of the enzyme membrane arm which is embedded in the lipid bilayer and involved in proton translocation. This chain is NADH-ubiquinone oxidoreductase chain 4L (MT-ND4L), found in Rousettus aegyptiacus (Egyptian fruit bat).